A 1269-amino-acid polypeptide reads, in one-letter code: Protein flightless-1 homolog (1269 aa).

Methionine 1 carries the N-acetylmethionine modification. The segment at 1-427 (MEATGVLPFV…SGPKDPMARK (427 aa)) is interaction with LRRFIP1 and LRRFIP2. LRR repeat units lie at residues 7–32 (LPFV…VKAM), 33–55 (TSLR…LAAL), 56–78 (QKLE…LSSL), 80–103 (SLRA…IFKL), 104–126 (DDLS…LENA), 127–149 (KNML…LFIN), 150–173 (LTDL…MRRL), 175–196 (HLQT…QLPA), 197–222 (MTAL…LEGL), 223–245 (SNLA…LYTL), 247–268 (SLRR…IDQW), 269–291 (VHVE…ICKL), 293–316 (KLKK…IGKL), 318–339 (NLEE…LCRC), 340–363 (PKLR…HFLT), and 365–385 (IEVL…PADR). The residue at position 21 (lysine 21) is an N6-acetyllysine. Residue serine 406 is modified to Phosphoserine. Serine 436 is subject to Phosphoserine; by SGK3. Residues 452–473 (VAQEKNKKQEESADARAPSGKV) are disordered. Basic and acidic residues predominate over residues 453–465 (AQEKNKKQEESAD). Residues 495–827 (VGQLPGLTIW…TVSRSLEGTE (333 aa)) are interaction with ACTL6A. 3 Gelsolin-like repeats span residues 509–591 (FVPV…EEFL), 629–703 (NIKL…PEFW), and 758–831 (ELMP…AQVF). Threonine 818 is subject to Phosphothreonine; by SGK3. Phosphoserine is present on residues serine 856 and serine 860. Positions 951-975 (KKEDKEEKAEGKEGEEATAEAEEKQ) are disordered. A compositionally biased stretch (basic and acidic residues) spans 952-965 (KEDKEEKAEGKEGE). Over residues 966–975 (EATAEAEEKQ) the composition is skewed to acidic residues. 2 Gelsolin-like repeats span residues 1075–1143 (TDSS…PENF) and 1181–1254 (KCSD…QHAF).

In terms of assembly, interacts with actin, ACTL6A, NCOA2 and CARM1. Interacts with LRRFIP1, LRRFIP2 and MYD88. Upon LPS stimulation, LRRFIP2 competes for MYD88-binding. LRRFIP1 constitutively blocks the interaction with MyD88, even in the absence of LPS. Interacts with the nuclear receptors ESR1 and THRB. Interacts with SGK3. Interacts (via the gelsolin-like region) with TMOD1. Interacts with (via the gelsolin-like region) TMOD3. Interacts with LMOD2, VCL, GSN and DES. In terms of tissue distribution, strongest expression in skeletal muscle with high expression also in the heart and lung.

It localises to the nucleus. It is found in the cytoplasm. Its subcellular location is the cytoskeleton. The protein localises to the microtubule organizing center. The protein resides in the centrosome. It localises to the cell projection. It is found in the podosome. Its subcellular location is the cell junction. The protein localises to the focal adhesion. In terms of biological role, is a regulator of actin polymerization, required for proper myofibril organization and regulation of the length of sarcomeric thin filaments. It also plays a role in the assembly of cardiomyocyte cell adhesion complexes. Regulates cytoskeletal rearrangements involved in cytokinesis and cell migration, by inhibiting Rac1-dependent paxillin phosphorylation. May play a role as coactivator in transcriptional activation by hormone-activated nuclear receptors (NR) and acts in cooperation with NCOA2 and CARM1. Involved in estrogen hormone signaling. This chain is Protein flightless-1 homolog (FLII), found in Homo sapiens (Human).